We begin with the raw amino-acid sequence, 279 residues long: Tryptophan 2,3-dioxygenase (279 aa).

Residues 48-52, Tyr-110, and Arg-114 contribute to the substrate site; that span reads FIIQH. Residue His-237 participates in heme binding. Thr-251 serves as a coordination point for substrate.

It belongs to the tryptophan 2,3-dioxygenase family. Homotetramer. Heme serves as cofactor.

The enzyme catalyses L-tryptophan + O2 = N-formyl-L-kynurenine. It participates in amino-acid degradation; L-tryptophan degradation via kynurenine pathway; L-kynurenine from L-tryptophan: step 1/2. Functionally, heme-dependent dioxygenase that catalyzes the oxidative cleavage of the L-tryptophan (L-Trp) pyrrole ring and converts L-tryptophan to N-formyl-L-kynurenine. Catalyzes the oxidative cleavage of the indole moiety. The sequence is that of Tryptophan 2,3-dioxygenase from Bradyrhizobium diazoefficiens (strain JCM 10833 / BCRC 13528 / IAM 13628 / NBRC 14792 / USDA 110).